Consider the following 333-residue polypeptide: Foldase protein PrsA (333 aa).

An N-terminal signal peptide occupies residues 1-21 (MKKRTIATGLVTLLSIVTLAA). A lipid anchor (N-palmitoyl cysteine) is attached at Cys-22. Cys-22 carries the S-diacylglycerol cysteine lipid modification. A PpiC domain is found at 144–237 (KPEVTAQVIQ…PVYYIVKITK (94 aa)). The segment at 296 to 333 (AASGSGSSGSTTTTTAASSAATTAADDQTTAAETTAAE) is disordered.

The protein belongs to the PrsA family.

It localises to the cell membrane. It catalyses the reaction [protein]-peptidylproline (omega=180) = [protein]-peptidylproline (omega=0). Its function is as follows. Plays a major role in protein secretion by helping the post-translocational extracellular folding of several secreted proteins. This Streptococcus mutans serotype c (strain ATCC 700610 / UA159) protein is Foldase protein PrsA.